Here is a 303-residue protein sequence, read N- to C-terminus: Golgi to ER traffic protein 2 (303 aa).

At 1-168 (MSEQPLSQDE…NAYNIYQQRL (168 aa)) the chain is on the cytoplasmic side. The disordered stretch occupies residues 19–86 (RQAKMARGKA…DPEDDPDLMD (68 aa)). Polar residues predominate over residues 31 to 48 (RLNNILSQGSSVKGTTDP). The helical transmembrane segment at 169–189 (WKFRFSIIRFAAVLTNFFYHY) threads the bilayer. Residues 190–216 (LTIQDYSFTSSPHFYVRALAPHPAVNS) are Lumenal-facing. A helical membrane pass occupies residues 217–236 (FITWFSTCEVAILASFYLIT). Topologically, residues 237–280 (SKNNIYANASDGNLLLKGISMGAMVLPQLRAYQPLVIRLAHYWE) are cytoplasmic. The helical transmembrane segment at 281–301 (VFSMLLGDIFLVVVLFGLVSI) threads the bilayer. The Lumenal segment spans residues 302-303 (YN).

Belongs to the GET2 family. In terms of assembly, component of the Golgi to ER traffic (GET) complex, which is composed of GET1, GET2 and GET3. Within the complex, GET1 and GET2 form a heterotetramer which is stabilized by phosphatidylinositol binding and which binds to the GET3 homodimer.

It is found in the endoplasmic reticulum membrane. The protein localises to the golgi apparatus membrane. Functionally, required for the post-translational delivery of tail-anchored (TA) proteins to the endoplasmic reticulum. Together with GET1, acts as a membrane receptor for soluble GET3, which recognizes and selectively binds the transmembrane domain of TA proteins in the cytosol. The GET complex cooperates with the HDEL receptor ERD2 to mediate the ATP-dependent retrieval of resident ER proteins that contain a C-terminal H-D-E-L retention signal from the Golgi to the ER. The sequence is that of Golgi to ER traffic protein 2 from Debaryomyces hansenii (strain ATCC 36239 / CBS 767 / BCRC 21394 / JCM 1990 / NBRC 0083 / IGC 2968) (Yeast).